A 20-amino-acid chain; its full sequence is Protein PR-L6 (20 aa).

It belongs to the BetVI family.

The sequence is that of Protein PR-L6 from Lupinus luteus (European yellow lupine).